A 1501-amino-acid chain; its full sequence is Pleiotropic ABC efflux transporter of multiple drugs CDR1 (1501 aa).

The disordered stretch occupies residues 1–30 (MSDSKMSSQDESKLEKAISQDSSSENHSIN). Topologically, residues 1 to 513 (MSDSKMSSQD…NFLRMKGDPS (513 aa)) are cytoplasmic. An NBD1 region spans residues 2 to 512 (SDSKMSSQDE…RNFLRMKGDP (511 aa)). Positions 8–18 (SQDESKLEKAI) are enriched in basic and acidic residues. Residues 150–404 (LATEGFRHFQ…FEKMGWKCPQ (255 aa)) form the ABC transporter 1 domain. The helical transmembrane segment at 514-534 (IPIFSVFGQLVMGLILSSVFY) threads the bilayer. Topologically, residues 535-548 (NLSQTTGSFYYRGA) are extracellular. The chain crosses the membrane as a helical span at residues 549–569 (AMFFAVLFNAFSSLLEIMSLF). At 570 to 597 (EARPIVEKHKKYALYRPSADALASIISE) the chain is on the cytoplasmic side. The chain crosses the membrane as a helical span at residues 598 to 618 (LPVKLAMSMSFNFVFYFMVNF). The Extracellular segment spans residues 619–622 (RRNP). The chain crosses the membrane as a helical span at residues 623–643 (GRFFFYWLMCIWCTFVMSHLF). The Cytoplasmic segment spans residues 644-654 (RSIGAVSTSIS). A helical membrane pass occupies residues 655-675 (GAMTPATVLLLAMVIYTGFVI). The Extracellular segment spans residues 676 to 764 (PTPSMLGWSR…QYYNSHKWRN (89 aa)). The chain crosses the membrane as a helical span at residues 765–785 (LGITIGFAVFFLAIYIALTEF). At 786 to 1195 (NKGAMQKGEI…TIVQDWRSPG (410 aa)) the chain is on the cytoplasmic side. The segment at 786 to 1195 (NKGAMQKGEI…TIVQDWRSPG (410 aa)) is NBD2. The region spanning 859-1103 (FFWRDLTYQV…MINYFEKYGA (245 aa)) is the ABC transporter 2 domain. Position 895–902 (895–902 (GASGAGKT)) interacts with ATP. The stretch at 1137 to 1164 (RNSSEYQAVREEINRMEAELSKLPRDND) forms a coiled coil. The chain crosses the membrane as a helical span at residues 1196 to 1216 (YIYSKIFLVVSAALFNGFSFF). Over 1217–1229 (KAKNNMQGLQNQM) the chain is Extracellular. The chain crosses the membrane as a helical span at residues 1230–1250 (FSVFMFFIPFNTLVQQMLPYF). Residues 1251-1280 (VKQRDVYEVREAPSRTFSWFAFIAGQITSE) lie on the Cytoplasmic side of the membrane. The chain crosses the membrane as a helical span at residues 1281–1301 (IPYQVAVGTIAFFCWYYPLGL). At 1302–1314 (YNNATPTDSVNPR) the chain is on the extracellular side. The helical transmembrane segment at 1315-1335 (GVLMWMLVTAFYVYTATMGQL) threads the bilayer. Over 1336–1355 (CMSFSELADNAANLATLLFT) the chain is Cytoplasmic. A helical membrane pass occupies residues 1356–1376 (MCLNFCGVLAGPDVLPGFWIF). Residues 1377-1466 (MYRCNPFTYL…NSLYSERWRN (90 aa)) are Extracellular-facing. The helical transmembrane segment at 1467–1487 (FGIFIAFIAINIILTVIFYWL) threads the bilayer. Residues 1488–1501 (ARVPKGNREKKNKK) are Cytoplasmic-facing.

It belongs to the ABC transporter superfamily.

The protein resides in the cell membrane. Its activity is regulated as follows. Disulfiram reverses CDR1-mediated drug resistance by interaction with both ATP and substrate-binding sites of the transporter and may be useful for antifungal therapy. Its function is as follows. Pleiotropic ABC efflux transporter that confers resistance to numerous chemicals including anisomycin, cycloheximide, fluconazole, miconazole, ketoconazole, itriconazole, nystatin, terbinafine, amorolfine, brefeldin A, amphotericin B, fluphenazine, as well as estrogen. Plays a role in farnesol-induced apoptotic process through glutathione efflux activity. Mediates in-to-out translocation of membrane phospholipids including aminophospholipids and thus regulates asymmetric distribution of phosphatidylethanolamine. Exhibits nucleoside triphosphatase activity. In Candida albicans (strain SC5314 / ATCC MYA-2876) (Yeast), this protein is Pleiotropic ABC efflux transporter of multiple drugs CDR1 (CDR1).